The following is a 319-amino-acid chain: Methionyl-tRNA formyltransferase (319 aa).

Ser112–Pro115 contacts (6S)-5,6,7,8-tetrahydrofolate.

It belongs to the Fmt family.

The catalysed reaction is L-methionyl-tRNA(fMet) + (6R)-10-formyltetrahydrofolate = N-formyl-L-methionyl-tRNA(fMet) + (6S)-5,6,7,8-tetrahydrofolate + H(+). In terms of biological role, attaches a formyl group to the free amino group of methionyl-tRNA(fMet). The formyl group appears to play a dual role in the initiator identity of N-formylmethionyl-tRNA by promoting its recognition by IF2 and preventing the misappropriation of this tRNA by the elongation apparatus. The protein is Methionyl-tRNA formyltransferase of Shewanella denitrificans (strain OS217 / ATCC BAA-1090 / DSM 15013).